The following is a 645-amino-acid chain: 1-deoxy-D-xylulose-5-phosphate synthase (645 aa).

Residues His87 and Gly128–Ser130 each bind thiamine diphosphate. Asp159 serves as a coordination point for Mg(2+). Thiamine diphosphate-binding positions include Gly160–Ala161, Asn188, Phe295, and Glu384. Asn188 contacts Mg(2+).

Belongs to the transketolase family. DXPS subfamily. Homodimer. The cofactor is Mg(2+). Thiamine diphosphate is required as a cofactor.

It catalyses the reaction D-glyceraldehyde 3-phosphate + pyruvate + H(+) = 1-deoxy-D-xylulose 5-phosphate + CO2. The protein operates within metabolic intermediate biosynthesis; 1-deoxy-D-xylulose 5-phosphate biosynthesis; 1-deoxy-D-xylulose 5-phosphate from D-glyceraldehyde 3-phosphate and pyruvate: step 1/1. Functionally, catalyzes the acyloin condensation reaction between C atoms 2 and 3 of pyruvate and glyceraldehyde 3-phosphate to yield 1-deoxy-D-xylulose-5-phosphate (DXP). The sequence is that of 1-deoxy-D-xylulose-5-phosphate synthase from Alcanivorax borkumensis (strain ATCC 700651 / DSM 11573 / NCIMB 13689 / SK2).